The chain runs to 457 residues: Trigger factor (457 aa).

Positions 162 to 243 (GDFVSIDLSA…VQTVKERELP (82 aa)) constitute a PPIase FKBP-type domain. The disordered stretch occupies residues 434–457 (AELFGSSEDETEADASDSAESEDK). Residues 440–457 (SEDETEADASDSAESEDK) show a composition bias toward acidic residues.

The protein belongs to the FKBP-type PPIase family. Tig subfamily.

Its subcellular location is the cytoplasm. It carries out the reaction [protein]-peptidylproline (omega=180) = [protein]-peptidylproline (omega=0). Involved in protein export. Acts as a chaperone by maintaining the newly synthesized protein in an open conformation. Functions as a peptidyl-prolyl cis-trans isomerase. The chain is Trigger factor from Rhodococcus erythropolis (strain PR4 / NBRC 100887).